A 58-amino-acid polypeptide reads, in one-letter code: Keratin-associated protein 19-9b (58 aa).

The tract at residues 6-52 is 12 X 2 AA repeats of G-[YCGS]; it reads GNYYGGLGYGLGGFGGFGGLGYGYGSSYGLGGYGGYGYFSPSFYGGY.

The protein belongs to the KRTAP type 19 family. Interacts with hair keratins.

Functionally, in the hair cortex, hair keratin intermediate filaments are embedded in an interfilamentous matrix, consisting of hair keratin-associated proteins (KRTAP), which are essential for the formation of a rigid and resistant hair shaft through their extensive disulfide bond cross-linking with abundant cysteine residues of hair keratins. The matrix proteins include the high-sulfur and high-glycine-tyrosine keratins. The sequence is that of Keratin-associated protein 19-9b (Krtap19-9b) from Mus musculus (Mouse).